The chain runs to 195 residues: Holliday junction branch migration complex subunit RuvA (195 aa).

Residues 1-64 are domain I; sequence MIASIRGVIQ…EDALTLYGFS (64 aa). Positions 65-139 are domain II; the sequence is DNAQRSLFEQ…GKIDFRQLAA (75 aa). A flexible linker region spans residues 139–143; the sequence is ASGST. A domain III region spans residues 144–195; sequence SVSALDRELSEILVSLGYSAAEAAAAIASLPSDAPPTLEERLRLALRYFGSA.

This sequence belongs to the RuvA family. As to quaternary structure, homotetramer. Forms an RuvA(8)-RuvB(12)-Holliday junction (HJ) complex. HJ DNA is sandwiched between 2 RuvA tetramers; dsDNA enters through RuvA and exits via RuvB. An RuvB hexamer assembles on each DNA strand where it exits the tetramer. Each RuvB hexamer is contacted by two RuvA subunits (via domain III) on 2 adjacent RuvB subunits; this complex drives branch migration. In the full resolvosome a probable DNA-RuvA(4)-RuvB(12)-RuvC(2) complex forms which resolves the HJ.

The protein resides in the cytoplasm. The RuvA-RuvB-RuvC complex processes Holliday junction (HJ) DNA during genetic recombination and DNA repair, while the RuvA-RuvB complex plays an important role in the rescue of blocked DNA replication forks via replication fork reversal (RFR). RuvA specifically binds to HJ cruciform DNA, conferring on it an open structure. The RuvB hexamer acts as an ATP-dependent pump, pulling dsDNA into and through the RuvAB complex. HJ branch migration allows RuvC to scan DNA until it finds its consensus sequence, where it cleaves and resolves the cruciform DNA. In Chloroflexus aggregans (strain MD-66 / DSM 9485), this protein is Holliday junction branch migration complex subunit RuvA.